The primary structure comprises 237 residues: Lectin alpha chain (237 aa).

Glu-8 and Asp-10 together coordinate Mn(2+). Asp-10, Tyr-12, Asn-14, and Asp-19 together coordinate Ca(2+). Residue Tyr-12 participates in a carbohydrate binding. Positions 19 and 24 each coordinate Mn(2+). Position 99–100 (99–100 (LY)) interacts with a carbohydrate. Residue Asp-208 coordinates Ca(2+). Residue Arg-228 coordinates a carbohydrate.

This sequence belongs to the leguminous lectin family. As to quaternary structure, homotetramer. Post-translationally, the beta and gamma chains are produced by partial proteolytic processing of the lectin alpha chain by an asparaginyl endopeptidase.

Its subcellular location is the vacuole. The protein resides in the aleurone grain. D-mannose/D-glucose-binding lectin with hemagglutinating activity towards rabbit and human erythrocytes. In rats, elicits an acute inflammatory response by inducing neutrophil migration and induces dose-dependent paw edema. This chain is Lectin alpha chain, found in Macropsychanthus wilsonii (Wilson's clusterpea).